The sequence spans 2495 residues: Non-reducing polyketide synthase adrD (2495 aa).

Residues 14-252 (VVFGPQSSEI…HHSRHVTAVQ (239 aa)) are N-terminal acylcarrier protein transacylase domain (SAT). Positions 386–807 (VIPIAITGMG…GSNAALVVKQ (422 aa)) constitute a Ketosynthase family 3 (KS3) domain. Active-site for beta-ketoacyl synthase activity residues include Cys-551, His-686, and His-725. The segment at 913–1222 (LCFGGQNGNE…QALDLGGALA (310 aa)) is malonyl-CoA:ACP transacylase (MAT) domain. Ser-1000 acts as the For acyl/malonyl transferase activity in catalysis. The N-terminal hotdog fold stretch occupies residues 1294–1422 (KEFVQLLTKQ…GEISLHPFGQ (129 aa)). Residues 1294-1601 (KEFVQLLTKQ…FTSVSIAGLS (308 aa)) enclose the PKS/mFAS DH domain. The segment at 1295 to 1600 (EFVQLLTKQP…TFTSVSIAGL (306 aa)) is product template (PT) domain. The active-site Proton acceptor; for dehydratase activity is His-1325. The interval 1450–1601 (ESSGLKGFAV…FTSVSIAGLS (152 aa)) is C-terminal hotdog fold. The active-site Proton donor; for dehydratase activity is the Asp-1508. A Carrier domain is found at 1651 to 1725 (SGHFMVVQEM…TLVQTIFPDA (75 aa)). Ser-1685 carries the post-translational modification O-(pantetheine 4'-phosphoryl)serine. Positions 1887 to 2120 (QHTSEHNLLR…GFQWVDWTYN (234 aa)) are methyltransferase (CMeT) domain. Residues 2150–2495 (YLMNEETIVY…YEFLRDHVRY (346 aa)) form a thioesterase (TE) domain region. Active-site for thioesterase activity residues include Ser-2273 and Asp-2432.

It catalyses the reaction 3 malonyl-CoA + acetyl-CoA + 2 S-adenosyl-L-methionine = 3,5-dimethylorsellinate + 2 S-adenosyl-L-homocysteine + 3 CO2 + 4 CoA. The protein operates within secondary metabolite biosynthesis; terpenoid biosynthesis. Its function is as follows. Non-reducing polyketide synthase; part of the gene cluster that mediates the biosynthesis of andrastins, meroterpenoid compounds that exhibit inhibitory activity against ras farnesyltransferase, suggesting that they could be promising leads for antitumor agents. The first step of the pathway is the synthesis of 3,5-dimethylorsellinic acid (DMOA) by the polyketide synthase adrD via condensation of one acetyl-CoA starter unit with 3 malonyl-CoA units and 2 methylations. DMAO is then converted to farnesyl-DMAO by the prenyltransferase adrG. The methyltransferase adrK catalyzes the methylation of the carboxyl group of farnesyl-DMAO to farnesyl-DMAO methyl ester which is further converted to epoxyfarnesyl-DMAO methyl ester by the FAD-dependent monooxygenase adrH. The terpene cyclase adrI then catalyzes the carbon skeletal rearrangement to generate the andrastin E, the first compound in the pathway having the andrastin scaffold, with the tetracyclic ring system. The post-cyclization tailoring enzymes adrF, adrE, adrJ, and adrA, are involved in the conversion of andrastin E into andrastin A. The short chain dehydrogenase adrF is responsible for the oxidation of the C-3 a hydroxyl group of andrastin E to yield the corresponding ketone, andrastin D. The ketoreductase adrE stereoselectively reduces the carbonyl moiety to reverse the stereochemistry of the C-3 position to yield andrastin F. The acetyltransferase adrJ is the acetyltransferase that attaches the acetyl group to the C-3 hydroxyl group of andrastin F to yield andrastin C. Finally, the cytochrome P450 monooxygenase adrA catalyzes two sequential oxidation reactions of the C-23 methyl group, to generate the corresponding alcohol andrastin B, and aldehyde andrastin A. The chain is Non-reducing polyketide synthase adrD from Penicillium roqueforti.